The primary structure comprises 548 residues: Splicing factor U2af large subunit B (548 aa).

The segment covering 1 to 82 (MADDHAAAAD…DRDRDRDKDR (82 aa)) has biased composition (basic and acidic residues). The interval 1-156 (MADDHAAAAD…SKRVSGFDMA (156 aa)) is disordered. A compositionally biased stretch (basic residues) spans 83–93 (DRHHRHHRERR). The segment covering 94-120 (EHRDRSDDHDRHRSRDSERRRDHERDG) has biased composition (basic and acidic residues). Basic residues predominate over residues 121–149 (RRRHRSRSRSRSRGRDRRSRSRSRSKSKR). RRM domains follow at residues 214 to 297 (RRVY…RPTD), 334 to 412 (DRIF…RANQ), and 453 to 539 (QVVS…YPEN).

This sequence belongs to the splicing factor SR family.

The protein resides in the nucleus. In terms of biological role, necessary for the splicing of pre-mRNA. In Oryza sativa subsp. japonica (Rice), this protein is Splicing factor U2af large subunit B (U2AF65B).